The following is a 141-amino-acid chain: Photosystem II protein PSBR, chloroplastic (141 aa).

The N-terminal 27 residues, 1–27, are a transit peptide targeting the chloroplast; the sequence is MATMQISAKGLAPLRPRVSSRRVVKPV. Phosphothreonine is present on residues Thr34 and Thr37. The residue at position 43 (Ser43) is a Phosphoserine. Residues 114 to 134 form a helical membrane-spanning segment; it reads GLIAWAGLVLVLLAVGVNLII.

This sequence belongs to the psbR family.

Its subcellular location is the plastid. The protein resides in the chloroplast thylakoid membrane. Its function is as follows. Associated with the oxygen-evolving complex of photosystem II (PSII). Is required for the stable binding of LHCSR3 to PSII-LHCII supercomplexes and is essential for efficient energy-dependent quenching and the integrity of the PSII-LHCII-LHCSR3 supercomplex under continuous high light. This is Photosystem II protein PSBR, chloroplastic from Chlamydomonas reinhardtii (Chlamydomonas smithii).